The primary structure comprises 187 residues: Basic helix-loop-helix transcription factor scleraxis (187 aa).

Disordered stretches follow at residues 21 to 83 and 140 to 163; these read LSED…TNSV and AFFH…QPKQ. The span at 34–43 shows a compositional bias: basic and acidic residues; it reads SDEKPFHLDA. Over residues 50 to 72 the composition is skewed to basic residues; sequence AGKRRSGKKAGRLHREPRQRHTA. The bHLH domain occupies 67 to 119; the sequence is RQRHTANARERDRTNSVNTAFTALRTLIPTEPADRKLSKIETLRLASSYISHL.

In terms of assembly, efficient DNA binding requires dimerization with another bHLH protein. Dimerizes and binds the E-box consensus sequence with E12. Expressed in the intersomitic, the superficial proximomedial limb mesenchyme and the subectodermal mesenchyme.

Its subcellular location is the nucleus. Its function is as follows. Plays an early essential role in mesoderm formation, as well as a later role in formation of somite-derived chondrogenic lineages. The sequence is that of Basic helix-loop-helix transcription factor scleraxis (SCX) from Gallus gallus (Chicken).